The primary structure comprises 334 residues: Large ribosomal subunit protein uL3 (334 aa).

Positions 1-10 are enriched in basic residues; sequence MGMKKSRPRR. A disordered region spans residues 1–20; that stretch reads MGMKKSRPRRGSLAFSPRKR.

The protein belongs to the universal ribosomal protein uL3 family. Part of the 50S ribosomal subunit. Forms a cluster with proteins L14 and L24e.

One of the primary rRNA binding proteins, it binds directly near the 3'-end of the 23S rRNA, where it nucleates assembly of the 50S subunit. This Methanococcus maripaludis (strain C7 / ATCC BAA-1331) protein is Large ribosomal subunit protein uL3.